Here is a 147-residue protein sequence, read N- to C-terminus: Small ribosomal subunit protein uS12 (147 aa).

This sequence belongs to the universal ribosomal protein uS12 family. As to quaternary structure, part of the 30S ribosomal subunit.

Its function is as follows. With S4 and S5 plays an important role in translational accuracy. Located at the interface of the 30S and 50S subunits. In Staphylothermus marinus (strain ATCC 43588 / DSM 3639 / JCM 9404 / F1), this protein is Small ribosomal subunit protein uS12.